A 339-amino-acid chain; its full sequence is tRNA dimethylallyltransferase (339 aa).

Residue 33–40 (GPTASGKT) participates in ATP binding. 35-40 (TASGKT) is a substrate binding site. 2 interaction with substrate tRNA regions span residues 58–61 (DSLL) and 182–186 (QRIQR).

Belongs to the IPP transferase family. In terms of assembly, monomer. Mg(2+) is required as a cofactor.

It catalyses the reaction adenosine(37) in tRNA + dimethylallyl diphosphate = N(6)-dimethylallyladenosine(37) in tRNA + diphosphate. Catalyzes the transfer of a dimethylallyl group onto the adenine at position 37 in tRNAs that read codons beginning with uridine, leading to the formation of N6-(dimethylallyl)adenosine (i(6)A). The polypeptide is tRNA dimethylallyltransferase (Acidithiobacillus ferrooxidans (strain ATCC 23270 / DSM 14882 / CIP 104768 / NCIMB 8455) (Ferrobacillus ferrooxidans (strain ATCC 23270))).